Reading from the N-terminus, the 188-residue chain is Accessory gene regulator protein B (188 aa).

Helical transmembrane passes span 49 to 69 (VALLFHTFLYTLITHLTYFFV), 82 to 102 (LLCHIQNLVLFVALPWSIVHF), 104 to 124 (VSWTFMIFVAFIAFIIIICYA), and 163 to 183 (YMQLIALGMCIEAITLLPIFF).

It belongs to the AgrB family.

Its subcellular location is the cell membrane. Its function is as follows. Essential for the production of a quorum sensing system signal molecule, the autoinducing peptide (AIP). This quorum sensing system is responsible for the regulation of the expression of virulence factor genes. Involved in the proteolytic processing of AgrD, the precursor of AIP. The chain is Accessory gene regulator protein B from Staphylococcus lugdunensis.